Consider the following 574-residue polypeptide: MGKSRQNSTTTVDREKDEIQKAMGHEKAEFEALEVARHGGREIDDLIDDMERQLDEAGGLNKGFFQVQFANPKHFTWLLVAFASMGGLLSGLDQSLISGANLFLPDDLGLTEHENSLVNSGMPLGAVGGALLLSPANEYFGRKGAIIISIILYTIGAALEAGSINFGMIVSSRVILGLGVGLEGGTVPVYVAETVERRIRGNLVSLYQFNIALGEVLGYAVGAIFLNVPGNWRYILGSSLLFSTIMFFGMLFLPESPRFLIHQKRHLDAYKVWKRIRGIEDRESREEFYVMSASVVSEENAVAEGAKNHRFPWMDFFTEPRARRALVYANIMILLGQLTGVNAIMYYMSVLMNQIGFDKKESNYMSLVGGGSLLLGTIPAIFLMERFGRRFWAITMLPGFFIGLVLIGVSYQFDVETQLQTVEGLYLSGLIIYMGFFGSYACLTWVVPSEVYPTYLRSYGMTTSDALLFLASFIVTYNFTAMQNAMGKTGLALGFYGGIAFIGEIYQIFFMPETKNKTLEEIDVVFSRPTMDIVRENWAGVKETTHLLLTGHWHKVFVEQAMTDPKDQVQVSHA.

At 1-76 (MGKSRQNSTT…VQFANPKHFT (76 aa)) the chain is on the cytoplasmic side. The chain crosses the membrane as a helical span at residues 77–97 (WLLVAFASMGGLLSGLDQSLI). Topologically, residues 98-115 (SGANLFLPDDLGLTEHEN) are extracellular. A helical membrane pass occupies residues 116 to 136 (SLVNSGMPLGAVGGALLLSPA). At 137 to 143 (NEYFGRK) the chain is on the cytoplasmic side. Residues 144-164 (GAIIISIILYTIGAALEAGSI) form a helical membrane-spanning segment. At 165–173 (NFGMIVSSR) the chain is on the extracellular side. The helical transmembrane segment at 174 to 194 (VILGLGVGLEGGTVPVYVAET) threads the bilayer. Topologically, residues 195–205 (VERRIRGNLVS) are cytoplasmic. A helical transmembrane segment spans residues 206-226 (LYQFNIALGEVLGYAVGAIFL). Residues 227 to 233 (NVPGNWR) are Extracellular-facing. Residues 234–254 (YILGSSLLFSTIMFFGMLFLP) traverse the membrane as a helical segment. At 255 to 330 (ESPRFLIHQK…RARRALVYAN (76 aa)) the chain is on the cytoplasmic side. A helical membrane pass occupies residues 331–351 (IMILLGQLTGVNAIMYYMSVL). Topologically, residues 352 to 363 (MNQIGFDKKESN) are extracellular. The helical transmembrane segment at 364–384 (YMSLVGGGSLLLGTIPAIFLM) threads the bilayer. Residues 385–390 (ERFGRR) are Cytoplasmic-facing. The chain crosses the membrane as a helical span at residues 391–411 (FWAITMLPGFFIGLVLIGVSY). Topologically, residues 412–426 (QFDVETQLQTVEGLY) are extracellular. Residues 427–447 (LSGLIIYMGFFGSYACLTWVV) form a helical membrane-spanning segment. Residues 448–465 (PSEVYPTYLRSYGMTTSD) lie on the Cytoplasmic side of the membrane. The chain crosses the membrane as a helical span at residues 466–486 (ALLFLASFIVTYNFTAMQNAM). Topologically, residues 487-490 (GKTG) are extracellular. Residues 491 to 511 (LALGFYGGIAFIGEIYQIFFM) traverse the membrane as a helical segment. Topologically, residues 512-574 (PETKNKTLEE…PKDQVQVSHA (63 aa)) are cytoplasmic.

This sequence belongs to the major facilitator superfamily. Sugar transporter (TC 2.A.1.1) family.

The protein resides in the cell membrane. It catalyses the reaction myo-inositol(out) + H(+)(out) = myo-inositol(in) + H(+)(in). Its function is as follows. Transporter for myo-inositol. Also appears to transport the polyketide mycotoxin fumonisin B1 (FB1). Does not appear to transport hexose sugars. The polypeptide is Myo-inositol transporter FST1 (Gibberella moniliformis (strain M3125 / FGSC 7600) (Maize ear and stalk rot fungus)).